Consider the following 430-residue polypeptide: MAEAVLIDLSGLQLNAQKNCHETLLETLDGIHYHHAPKAKFLCIICCRNASKEKDGEYGLCELEAGNGFSRLAGKFETVSHPCLAASLYTIKQKIDEENLSCIKVIVPEHRKLLMKAYVGQLFTEVYEFEFEDLQGAWRDSLLKPSTGINVTTTQELEDIQHEIETYLRSLPALKGDLTIVTSPLIPDNFLHGFTTRTGGISSVPTLSSLNLFSSSKRRDPKVVVQENVRRLANAAGFNAEKFYRIKTDHASEVWVMGKKEPESYDGIVTNQRGVTITALGADCIPIVFADPVKKACGVAHSGWKGTLLGVAMATVNAMIAEYGCDVEDIIVVLGPSVGSCCFTLPKESAVSFHSLHPSCVRHFDSPRPYVDIRKATRILLERGGILPQNIQDQKEDLDLCTSCHPEKFFSHVRDGLNFGTQIGFISLRE.

Lys-247 carries the post-translational modification N6-acetyllysine. His-250, Cys-284, and His-301 together coordinate Zn(2+).

The protein belongs to the purine nucleoside phosphorylase YfiH/LACC1 family. As to quaternary structure, interacts with FASN. Interacts with SDHA. Interacts with ATF6, EIF2AK3 and ERN1. Post-translationally, phosphorylated on tyrosine residues. In terms of tissue distribution, predominantly expressed in myeloid cells. Highly expressed in primary macrophages and dendritic cells sorted from the peritoneum or spleen, respectively (at protein level).

Its subcellular location is the cytoplasm. It is found in the nucleus. The protein localises to the endoplasmic reticulum. The protein resides in the peroxisome. It carries out the reaction adenosine + phosphate = alpha-D-ribose 1-phosphate + adenine. The catalysed reaction is inosine + phosphate = alpha-D-ribose 1-phosphate + hypoxanthine. It catalyses the reaction guanosine + phosphate = alpha-D-ribose 1-phosphate + guanine. The enzyme catalyses S-methyl-5'-thioadenosine + phosphate = 5-(methylsulfanyl)-alpha-D-ribose 1-phosphate + adenine. It carries out the reaction adenosine + H2O + H(+) = inosine + NH4(+). Its function is as follows. Purine nucleoside enzyme that catalyzes the phosphorolysis of adenosine, guanosine and inosine nucleosides, yielding D-ribose 1-phosphate and the respective free bases, adenine, guanine and hypoxanthine. Also catalyzes the phosphorolysis of S-methyl-5'-thioadenosine into adenine and S-methyl-5-thio-alpha-D-ribose 1-phosphate. Also has adenosine deaminase activity. Acts as a regulator of innate immunity in macrophages by modulating the purine nucleotide metabolism, thereby regulating the metabolic function and bioenergetic state of macrophages. Enables a purine nucleotide cycle between adenosine and inosine monophosphate and adenylosuccinate that prevents cytoplasmic acidification and balances the cytoplasmic-mitochondrial redox interface. The purine nucleotide cycle consumes aspartate and releases fumarate in a manner involving fatty acid oxidation and ATP-citrate lyase activity. Participates in pattern recognition receptor-induced cytokines in macrophages: associates with the NOD2-signaling complex and promotes optimal NOD2-induced signaling, cytokine secretion and bacterial clearance. Localizes to the endoplasmic reticulum upon PRR stimulation of macrophages and associates with endoplasmic reticulum-stress sensors, promoting the endoplasmic reticulum unfolded protein response (UPR). Does not show laccase activity. In Mus musculus (Mouse), this protein is Purine nucleoside phosphorylase LACC1.